A 969-amino-acid chain; its full sequence is MKIPFFILHILLLQFLLCLIRCYVHNDVIKFGEENSLKCSQGNLYVLHCEVQCLNGNNEIIHKRCNDDIEKKCNGNNKCIYFFEYELRKKTQSFRNKNSIEISECVESEQNEVKTSTTCLLSNSFILDEAFIQYFFFIKNKNEEPVICKDGNINIKSALLHSPFCEIKLKDISEYIRKKCDNNKECLIDPLDVQKNLLNEEDPCYINNSYVSVNVVCNKEEEIGDESTDSSSMEIQDSTSNEQDENVKGMSSSQEMNSNNDENKNQDNESDDDVNNNNNNNNDDQDEQGNDGDVTSSMNKNEDNKDLEHGSSNDVNNNTDTLVNNKENKEFVLKEKSSLTSKINKELAHRTALFNKLADNISLLLNKKYDSFEIKDVLEDRYNEMKRDANPDVYYIYLMDTLDIEKIEDINLEEVKMSLLASLKETMNKIDTIEKKIEEFKNKYISLYNKVKTTMPELFDLNEDLVLLYNDFPFDNGMISSDIFFKYNPSENIMDHQEMVKKGSITEDELRIVNDLEPLDNYRRRKRITELRKILVEKLRILYLEKNNLFNTQASCIKSYCYKNPLNLKTLEVLLKKNYYRLKENKDYDVVSSIIQHLDNVDANKKKKWLTHERILKKLQVLIAEGYKRINEKEKDIDRRMAVYNALYEKAQSYNLQKLFNDSNDFLKKYAIMGNSFDDGDEVFGSQSSNFNIFDSNNTDQNNEQEQPKQDDQLLNNNNDDVLSESNNENKEKTSDDATHKETQEKSDQEPSQNIQEDNSDEKHAENEENVEQIETDSNVSEEANDENKDNMQTTTDEGTEELQQNDEDAESLTKENSKSEEQENEDSTDAEAIDKEEVETEEKGKDEQKKDEQKEQDEEEDGEKENKHKSSETTNETVTDIEENKNEVKGEEHLQGSEQSIEASESSQKDETKETEDKEEYVNANDDESSEEDTTPNETNKTDNGSSFFFAMSNALLVILLLLFIEFL.

A signal peptide spans 1–22 (MKIPFFILHILLLQFLLCLIRC). Asn207 is a glycosylation site (N-linked (GlcNAc...) asparagine). The interval 223 to 328 (IGDESTDSSS…TDTLVNNKEN (106 aa)) is disordered. The span at 229-241 (DSSSMEIQDSTSN) shows a compositional bias: polar residues. An N-linked (GlcNAc...) asparagine glycan is attached at Asn268. A compositionally biased stretch (basic and acidic residues) spans 300 to 311 (KNEDNKDLEHGS). The span at 312 to 325 (SNDVNNNTDTLVNN) shows a compositional bias: low complexity. N-linked (GlcNAc...) asparagine glycosylation is found at Asn317, Asn360, Asn661, and Asn697. A compositionally biased stretch (polar residues) spans 688–705 (SSNFNIFDSNNTDQNNEQ). The interval 688-947 (SSNFNIFDSN…NETNKTDNGS (260 aa)) is disordered. Over residues 713-727 (QLLNNNNDDVLSESN) the composition is skewed to low complexity. Residues 728–749 (NENKEKTSDDATHKETQEKSDQ) are compositionally biased toward basic and acidic residues. An N-linked (GlcNAc...) asparagine glycan is attached at Asn779. Over residues 798–811 (EGTEELQQNDEDAE) the composition is skewed to acidic residues. The span at 812-822 (SLTKENSKSEE) shows a compositional bias: basic and acidic residues. The span at 823-841 (QENEDSTDAEAIDKEEVET) shows a compositional bias: acidic residues. Residues 842 to 854 (EEKGKDEQKKDEQ) show a composition bias toward basic and acidic residues. A compositionally biased stretch (acidic residues) spans 855–864 (KEQDEEEDGE). The N-linked (GlcNAc...) asparagine glycan is linked to Asn876. Positions 883–896 (EENKNEVKGEEHLQ) are enriched in basic and acidic residues. The segment covering 897–907 (GSEQSIEASES) has biased composition (low complexity). Over residues 908-917 (SQKDETKETE) the composition is skewed to basic and acidic residues. Positions 918–936 (DKEEYVNANDDESSEEDTT) are enriched in acidic residues. Polar residues predominate over residues 937-947 (PNETNKTDNGS). Asn938, Asn941, and Asn945 each carry an N-linked (GlcNAc...) asparagine glycan. Asn945 carries the GPI-anchor amidated asparagine lipid modification. A propeptide spans 946 to 969 (GSSFFFAMSNALLVILLLLFIEFL) (removed in mature form).

Forms a complex composed of RH5, P113 and human BSG/basigin; the complex bridges the merozoite and host erythrocyte membranes. Within the complex, interacts with RH5 (via N-terminus); the interaction tethers RH5 to the merozoite membrane.

The protein localises to the cell membrane. Membrane receptor which tethers secreted RH5 to the merozoite membrane during merozoite invasion of host erythocytes. In Plasmodium falciparum (isolate 3D7), this protein is Surface protein P113.